The primary structure comprises 391 residues: tRNA (cytosine(38)-C(5))-methyltransferase (391 aa).

Residues 4–391 form the SAM-dependent MTase C5-type domain; it reads LRVLELYSGV…VAKLIKILYE (388 aa). S-adenosyl-L-methionine is bound by residues 13–15, Asp34, 57–58, and Ser76; these read VGG and IE. Cys79 is an active-site residue. Ser376 provides a ligand contact to S-adenosyl-L-methionine.

The protein belongs to the class I-like SAM-binding methyltransferase superfamily. C5-methyltransferase family. As to expression, ubiquitous. Higher expression in testis, ovary and thymus and at much lower levels in spleen, prostate, colon, small intestine, and peripheral blood leukocytes.

It is found in the cytoplasm. The enzyme catalyses cytidine(38) in tRNA + S-adenosyl-L-methionine = 5-methylcytidine(38) in tRNA + S-adenosyl-L-homocysteine + H(+). Its function is as follows. Specifically methylates cytosine 38 in the anticodon loop of tRNA(Asp). Has higher activity on tRNA(Asp) modified with queuosine at position 34. This Homo sapiens (Human) protein is tRNA (cytosine(38)-C(5))-methyltransferase (TRDMT1).